A 181-amino-acid chain; its full sequence is Ribulose bisphosphate carboxylase small subunit, chloroplastic 2 (181 aa).

The N-terminal 54 residues, 1-54 (MASSMLSSAAVVTSPAQATMVAPFTGLKSSAAFPVTRKANNDITSIASNGGRVS), are a transit peptide targeting the chloroplast.

This sequence belongs to the RuBisCO small chain family. In terms of assembly, heterohexadecamer of 8 large and 8 small subunits.

It localises to the plastid. The protein resides in the chloroplast. RuBisCO catalyzes two reactions: the carboxylation of D-ribulose 1,5-bisphosphate, the primary event in carbon dioxide fixation, as well as the oxidative fragmentation of the pentose substrate. Both reactions occur simultaneously and in competition at the same active site. Although the small subunit is not catalytic it is essential for maximal activity. The polypeptide is Ribulose bisphosphate carboxylase small subunit, chloroplastic 2 (Brassica napus (Rape)).